We begin with the raw amino-acid sequence, 131 residues long: Arsenate reductase 2 (131 aa).

Residues Cys10, Cys82, and Cys89 each act as nucleophile in the active site. 2 disulfide bridges follow: Cys10–Cys82 and Cys82–Cys89.

Belongs to the low molecular weight phosphotyrosine protein phosphatase family. Thioredoxin-coupled ArsC subfamily.

It is found in the cytoplasm. It catalyses the reaction arsenate + [thioredoxin]-dithiol + H(+) = arsenite + [thioredoxin]-disulfide + H2O. In terms of biological role, catalyzes the reduction of arsenate [As(V)] to arsenite [As(III)]. The sequence is that of Arsenate reductase 2 from Staphylococcus haemolyticus (strain JCSC1435).